Here is a 388-residue protein sequence, read N- to C-terminus: S-adenosylmethionine synthase (388 aa).

His-17 is an ATP binding site. Mg(2+) is bound at residue Asp-19. Position 45 (Glu-45) interacts with K(+). Glu-58 and Gln-102 together coordinate L-methionine. Positions 102–112 (QSADIAQGVDA) are flexible loop. Residues 167–169 (DSK), 232–233 (RF), Asp-241, 247–248 (RK), Ala-264, and Lys-268 contribute to the ATP site. Asp-241 serves as a coordination point for L-methionine. Position 272 (Lys-272) interacts with L-methionine.

It belongs to the AdoMet synthase family. Homotetramer; dimer of dimers. Mg(2+) serves as cofactor. It depends on K(+) as a cofactor.

The protein localises to the cytoplasm. It carries out the reaction L-methionine + ATP + H2O = S-adenosyl-L-methionine + phosphate + diphosphate. It functions in the pathway amino-acid biosynthesis; S-adenosyl-L-methionine biosynthesis; S-adenosyl-L-methionine from L-methionine: step 1/1. In terms of biological role, catalyzes the formation of S-adenosylmethionine (AdoMet) from methionine and ATP. The overall synthetic reaction is composed of two sequential steps, AdoMet formation and the subsequent tripolyphosphate hydrolysis which occurs prior to release of AdoMet from the enzyme. In Paramagnetospirillum magneticum (strain ATCC 700264 / AMB-1) (Magnetospirillum magneticum), this protein is S-adenosylmethionine synthase.